The following is a 1845-amino-acid chain: Proteasome adapter and scaffold protein ECM29 (1845 aa).

An N-acetylalanine modification is found at Ala2. 27 HEAT repeats span residues 28 to 65, 107 to 144, 162 to 205, 326 to 362, 387 to 426, 429 to 466, 469 to 507, 683 to 720, 721 to 759, 783 to 820, 829 to 868, 870 to 907, 931 to 969, 975 to 1012, 1013 to 1050, 1112 to 1149, 1152 to 1189, 1194 to 1231, 1243 to 1281, 1285 to 1323, 1348 to 1386, 1390 to 1427, 1517 to 1554, 1558 to 1595, 1605 to 1642, 1646 to 1683, and 1779 to 1822; these read TDEQLQNIISKFLPPVLLKLSSTQEGVRKKVMELLVHL, YPRLPVEKQCELAPTLLTAMEGKPQPQQDSLMHLLIPT, NLAE…QGSS, RDPVSTRVKLKIVPHLLRSRQAAETFPANIQVVYDGL, PEIKIKPLGPMLLNGLTKLINEYKEDPKLLSMAYSAVGKL, RMPHLFTKDIALVQQLFEALCKEEPETRLAIQEALSMM, AYSTLEGAQRTLMEALVASYLIKPEVQVRQVAVKFASTV, YPEKLATKFVDKTEWIKSLMNNSKEEMRELAALFYSVV, VSTVSGNELKSMIEQLIKTTKDNHSPEIQHGSLLALGFT, TLPDQEELIQSATETIGSFLDSTSPLLAIAACTALGEI, PSEGSGFTKLHLVESLLSRIPSSKETNKMKERAIQTLGYF, VGDGDFPHQKLLLQGLMDSVEAKQIELQFTIGEAITSA, AGAKVNDVVPWVLDVILNKHIISPNPHVRQAACIWLLSL, THKEVKSHLKEIQSAFVSVLSENDELSQDVASKGLGLV, YELGNEQDQQELVSTLVETLMTGKRVKHEVSGETVVFQ, AGEQLAPFLPQLVPRLYRYQFDPNLGIRQAMTSIWNAL, DKSMVDKYLKEILQDLVKNLTSNMWRVRESSCLALNDL, PLDDIIDKLPEIWETLFRVQDDIKESVRKAAELALKTL, KGAAGQRTIAALLPCLLDKGMMSTVTEVRALSINTLVKI, AGAMLKPHAPKLIPALLESLSVLEPQVLNYLSLRATEQE, LQYLDVSVLGELVPRLCELIRSGVGLGTKGGCASVIVSL, CPQDLTPYSGKLMSALLSGLTDRNSVIQKSCAFAMGHL, SFGGIRLYLQELITITQKALQSQSWKMKAQGAIAMASI, TSSLVPPYLGMILTALLQGLAGRTWAGKEELLKAIACV, KSVPNQPSTNEILQAVLKECSKENVKYKIVAISCAADI, TKEDRFQEFSNIVIPLIKKNSLESSGVRTTKNEEENEK, and TYSS…LATM. Low complexity predominate over residues 193 to 207; the sequence is QSRQNSSSAQGSSSN. The tract at residues 193 to 217 is disordered; that stretch reads QSRQNSSSAQGSSSNSGGGSGIPQP. Phosphoserine is present on Ser830. At Thr836 the chain carries Phosphothreonine. Lys1039 participates in a covalent cross-link: Glycyl lysine isopeptide (Lys-Gly) (interchain with G-Cter in SUMO1).

It belongs to the ECM29 family. As to quaternary structure, non-stoichiometric component of the proteasome; associates with the 26S proteasome. Interacts (via N-terminus) with VPS11, VPS26A, VPS36, RAB11FIP4 and RABEP1. Interacts (via C-terminus) with DCTN1, DCTN2, KIF5B, MYH7, MYH10, MYO10 and ARF6.

The protein resides in the endoplasmic reticulum. Its subcellular location is the endoplasmic reticulum-Golgi intermediate compartment. It is found in the endosome. The protein localises to the cytoplasm. It localises to the cytoskeleton. The protein resides in the microtubule organizing center. Its subcellular location is the centrosome. It is found in the nucleus. The protein localises to the multivesicular body. It localises to the cytoplasmic vesicle. Its function is as follows. Adapter/scaffolding protein that binds to the 26S proteasome, motor proteins and other compartment specific proteins. May couple the proteasome to different compartments including endosome, endoplasmic reticulum and centrosome. May play a role in ERAD and other enhanced proteolysis. Promotes proteasome dissociation under oxidative stress. The polypeptide is Proteasome adapter and scaffold protein ECM29 (Homo sapiens (Human)).